The following is a 51-amino-acid chain: Large ribosomal subunit protein eL40 (51 aa).

Residues Cys-17, Cys-20, Cys-31, and Cys-34 each coordinate Zn(2+).

This sequence belongs to the eukaryotic ribosomal protein eL40 family. Part of the 50S ribosomal subunit. It depends on Zn(2+) as a cofactor.

This chain is Large ribosomal subunit protein eL40, found in Thermococcus kodakarensis (strain ATCC BAA-918 / JCM 12380 / KOD1) (Pyrococcus kodakaraensis (strain KOD1)).